A 504-amino-acid polypeptide reads, in one-letter code: Maturase K (504 aa).

It belongs to the intron maturase 2 family. MatK subfamily.

It localises to the plastid. It is found in the chloroplast. In terms of biological role, usually encoded in the trnK tRNA gene intron. Probably assists in splicing its own and other chloroplast group II introns. This is Maturase K from Calyptranthes pallens (Spicewood).